The sequence spans 107 residues: Nucleoid-associated protein CE0210 (107 aa).

Belongs to the YbaB/EbfC family. As to quaternary structure, homodimer.

Its subcellular location is the cytoplasm. The protein resides in the nucleoid. Its function is as follows. Binds to DNA and alters its conformation. May be involved in regulation of gene expression, nucleoid organization and DNA protection. This is Nucleoid-associated protein CE0210 from Corynebacterium efficiens (strain DSM 44549 / YS-314 / AJ 12310 / JCM 11189 / NBRC 100395).